Consider the following 1400-residue polypeptide: DNA-directed RNA polymerase subunit beta' (1400 aa).

Zn(2+) is bound by residues cysteine 71, cysteine 73, cysteine 86, and cysteine 89. 3 residues coordinate Mg(2+): aspartate 462, aspartate 464, and aspartate 466. Positions 811, 885, 892, and 895 each coordinate Zn(2+).

Belongs to the RNA polymerase beta' chain family. As to quaternary structure, the RNAP catalytic core consists of 2 alpha, 1 beta, 1 beta' and 1 omega subunit. When a sigma factor is associated with the core the holoenzyme is formed, which can initiate transcription. The cofactor is Mg(2+). Requires Zn(2+) as cofactor.

The enzyme catalyses RNA(n) + a ribonucleoside 5'-triphosphate = RNA(n+1) + diphosphate. In terms of biological role, DNA-dependent RNA polymerase catalyzes the transcription of DNA into RNA using the four ribonucleoside triphosphates as substrates. This is DNA-directed RNA polymerase subunit beta' from Brucella ovis (strain ATCC 25840 / 63/290 / NCTC 10512).